The following is a 708-amino-acid chain: E3 ubiquitin-protein ligase Praja-2 (708 aa).

The segment covering 1–10 (MSQYTEKEPA) has biased composition (basic and acidic residues). 2 disordered regions span residues 1 to 30 (MSQY…GYQT) and 53 to 90 (ERSL…SSLP). Position 2 is an N-acetylserine (S2). The span at 74–90 (ENSSGSSPLDQVDSSLP) shows a compositional bias: polar residues. S196 is modified (phosphoserine). 3 disordered regions span residues 244–342 (GDTE…KQRS), 385–411 (TQRE…DNPF), and 425–495 (DEDS…QTSL). T246 carries the post-translational modification Phosphothreonine. Positions 249–276 (VHQNSQEIQRSSQDEMVSTKQQNNTSQE) are enriched in polar residues. A phosphoserine mark is found at S253, S309, and S323. The span at 322–332 (ISSSQVDQETG) shows a compositional bias: polar residues. Basic and acidic residues predominate over residues 333–342 (FNRHEAKQRS). S342 bears the Phosphoserine; by PKA mark. T389 bears the Phosphothreonine; by PKA mark. Position 432 is a phosphoserine (S432). Positions 467–483 (NEPELQSDSSGPEEENQ) are enriched in acidic residues. Residues 484-493 (ELSLQEGEQT) are compositionally biased toward polar residues. Positions 531–708 (DGNNNLEDDS…PSNDSIAEAP (178 aa)) are interaction with PRKAR1A, PRKAR2A and PRKAR2B. Residues 550–570 (WSLFDGFADGLGVAEAISYVD) form a mediates interaction with TBC1D31 region. An RING-type; atypical zinc finger spans residues 634–675 (CPICCSEYIKDDIATELPCHHFFHKPCVSIWLQKSGTCPVCR). The segment at 685 to 708 (ASAAPSSEPDPDAPPSNDSIAEAP) is disordered. Residues 699 to 708 (PSNDSIAEAP) show a composition bias toward low complexity.

In terms of assembly, binds ubiquitin-conjugating enzymes (E2s). In vitro, interacts with the ubiquitin-conjugating enzyme, UBE2D2. The phosphorylated form interacts with PRKAR1A, PRKAR2A and PRKAR2B. Binds the catalytic subunits of cAMP-dependent protein kinase. Interacts with MFHAS1. Interacts with TBC1D31; the interaction is direct and recruits PJA2 to centrosomes.

It is found in the cytoplasm. It localises to the cell membrane. Its subcellular location is the endoplasmic reticulum membrane. The protein localises to the golgi apparatus membrane. The protein resides in the synapse. It is found in the postsynaptic density. It localises to the cytoskeleton. Its subcellular location is the microtubule organizing center. The protein localises to the centrosome. It catalyses the reaction S-ubiquitinyl-[E2 ubiquitin-conjugating enzyme]-L-cysteine + [acceptor protein]-L-lysine = [E2 ubiquitin-conjugating enzyme]-L-cysteine + N(6)-ubiquitinyl-[acceptor protein]-L-lysine.. The protein operates within protein modification; protein ubiquitination. In terms of biological role, has E2-dependent E3 ubiquitin-protein ligase activity. Responsible for ubiquitination of cAMP-dependent protein kinase type I and type II-alpha/beta regulatory subunits and for targeting them for proteasomal degradation. Essential for PKA-mediated long-term memory processes. Through the ubiquitination of MFHAS1, positively regulates the TLR2 signaling pathway that leads to the activation of the downstream p38 and JNK MAP kinases and promotes the polarization of macrophages toward the pro-inflammatory M1 phenotype. Plays a role in ciliogenesis by ubiquitinating OFD1. The polypeptide is E3 ubiquitin-protein ligase Praja-2 (PJA2) (Pongo abelii (Sumatran orangutan)).